The chain runs to 104 residues: Large ribosomal subunit protein bL21 (104 aa).

This sequence belongs to the bacterial ribosomal protein bL21 family. As to quaternary structure, part of the 50S ribosomal subunit. Contacts protein L20.

This protein binds to 23S rRNA in the presence of protein L20. This is Large ribosomal subunit protein bL21 from Allorhizobium ampelinum (strain ATCC BAA-846 / DSM 112012 / S4) (Agrobacterium vitis (strain S4)).